Here is a 148-residue protein sequence, read N- to C-terminus: tRNA-specific adenosine deaminase (148 aa).

The 116-residue stretch at 1–116 folds into the CMP/dCMP-type deaminase domain; sequence MEQALKQARL…SNLRYFNSSA (116 aa). His48 provides a ligand contact to Zn(2+). Catalysis depends on Glu50, which acts as the Proton donor. Cys78 and Cys81 together coordinate Zn(2+).

This sequence belongs to the cytidine and deoxycytidylate deaminase family. As to quaternary structure, homodimer. Zn(2+) serves as cofactor.

The catalysed reaction is adenosine(34) in tRNA + H2O + H(+) = inosine(34) in tRNA + NH4(+). Functionally, catalyzes the deamination of adenosine to inosine at the wobble position 34 of tRNA(Arg2). The chain is tRNA-specific adenosine deaminase from Rickettsia typhi (strain ATCC VR-144 / Wilmington).